Here is a 143-residue protein sequence, read N- to C-terminus: Transcriptional regulator MraZ (143 aa).

SpoVT-AbrB domains follow at residues glutamate 5–glutamate 47 and alanine 76–arginine 119.

The protein belongs to the MraZ family. In terms of assembly, forms oligomers.

It localises to the cytoplasm. The protein localises to the nucleoid. This Levilactobacillus brevis (strain ATCC 367 / BCRC 12310 / CIP 105137 / JCM 1170 / LMG 11437 / NCIMB 947 / NCTC 947) (Lactobacillus brevis) protein is Transcriptional regulator MraZ.